We begin with the raw amino-acid sequence, 457 residues long: Antizyme inhibitor 2 (457 aa).

The interval 115–138 (QVAQIKYAAKHGVRLLSFDNEVEL) is necessary for polyamine uptake stimulation.

Belongs to the Orn/Lys/Arg decarboxylase class-II family. ODC antizyme inhibitor subfamily. As to quaternary structure, monomer. Interacts with OAZ1, OAZ2 and OAZ3; this interaction disrupts the interaction between the antizyme and ODC1. Does not form a heterodimer with ODC1. Post-translationally, ubiquitinated, leading to its proteasomal degradation; a process that is reduced in presence of antizymes. May also be degraded through the lysosomal degradative pathway in a proteasomal-independent manner.

It localises to the nucleus. It is found in the cytoplasm. The protein resides in the perinuclear region. The protein localises to the membrane. Its subcellular location is the cytoplasmic vesicle. It localises to the endoplasmic reticulum-Golgi intermediate compartment. It is found in the golgi apparatus. The protein resides in the cis-Golgi network. The protein localises to the trans-Golgi network. Its subcellular location is the cytoplasmic granule. It localises to the cell projection. It is found in the axon. The protein resides in the dendrite. The protein localises to the perikaryon. Its function is as follows. Antizyme inhibitor (AZI) protein that positively regulates ornithine decarboxylase (ODC) activity and polyamine uptake. AZI is an enzymatically inactive ODC homolog that counteracts the negative effect of ODC antizymes (AZs) OAZ1, OAZ2 and OAZ3 on ODC activity by competing with ODC for antizyme-binding. Inhibits antizyme-dependent ODC degradation and releases ODC monomers from their inactive complex with antizymes, leading to formation of the catalytically active ODC homodimer and restoring polyamine production. Participates in the morphological integrity of the trans-Golgi network (TGN) and functions as a regulator of intracellular secretory vesicle trafficking. The chain is Antizyme inhibitor 2 (Azin2) from Rattus norvegicus (Rat).